Here is a 57-residue protein sequence, read N- to C-terminus: Large ribosomal subunit protein bL32A (57 aa).

A disordered region spans residues 1 to 22 (MAVPARRTSKTKKRLRRTHEKL). Residues 7–20 (RTSKTKKRLRRTHE) are compositionally biased toward basic residues.

This sequence belongs to the bacterial ribosomal protein bL32 family.

This chain is Large ribosomal subunit protein bL32A (rpmF1), found in Enterococcus faecalis (strain ATCC 700802 / V583).